The primary structure comprises 3421 residues: Hemocyanin 2 (3421 aa).

Positions 1-19 (MWTILALLTATLLFEGAFS) are cleaved as a signal peptide. The interval 20–442 (VDTVVRKNVD…KPPVPVAQAN (423 aa)) is functional unit a (wall). Cu cation is bound at residue His62. Cys68 and Cys78 are joined by a disulfide. The 2'-(S-cysteinyl)-histidine (Cys-His) cross-link spans 79–81 (CLH). The Cu cation site is built by His81, His90, His200, His204, and His231. Disulfide bonds link Cys190/Cys257 and Cys344/Cys356. Asn408 carries an N-linked (GlcNAc...) asparagine glycan. The interval 443–853 (LAVRKNINDL…RADAKDFGHS (411 aa)) is functional unit b (wall). A Cu cation-binding site is contributed by His483. Cys489 and Cys500 are oxidised to a cystine. The 2'-(S-cysteinyl)-histidine (Cys-His) cross-link spans 501 to 503 (CVH). Positions 503, 512, 622, 626, 653, and 894 each coordinate Cu cation. Residues Cys612 and Cys678 are joined by a disulfide bond. Residues 632 to 673 (SEKYSMSSLHYTAFDPIFYLHHSNVDRLWAIWQALQIRRGKS) form a WD 1 repeat. The interval 854 to 1275 (RKIRKAVDSL…DEYREAVTSA (422 aa)) is functional unit c (wall). Residues Cys900 and Cys911 are joined by a disulfide bond. The segment at residues 912–914 (CVH) is a cross-link (2'-(S-cysteinyl)-histidine (Cys-His)). Cu cation is bound by residues His914, His923, His1033, His1037, and His1063. Disulfide bonds link Cys1023–Cys1090 and Cys1180–Cys1187. Residues 1043 to 1084 (NEPYSMSSLRYTTYDPIFFLHRSNTDRLWAIWQALQKYRGKP) form a WD 2 repeat. Asn1183 carries an N-linked (GlcNAc...) asparagine glycan. Positions 1276 to 1685 (SHIRKNIRDL…NIYYDGLSQH (410 aa)) are functional unit d (wall). Cu cation is bound at residue His1313. Residues Cys1319 and Cys1328 are joined by a disulfide bond. Positions 1329 to 1331 (CVH) form a cross-link, 2'-(S-cysteinyl)-histidine (Cys-His). Cu cation is bound by residues His1331 and His1340. A WD 3 repeat occupies 1387–1425 (QTFDPNPFFRGHIAFENAVTSRDPQPELWDNKDFYENVM). 2 disulfide bridges follow: Cys1434-Cys1501 and Cys1590-Cys1599. Residues His1444, His1448, and His1475 each coordinate Cu cation. The WD 4 repeat unit spans residues 1454–1495 (RAKYSLSSLDYTAFDPVFFLHHANVDRIWAIWQDLQRYRKKP). Residue Asn1653 is glycosylated (N-linked (GlcNAc...) asparagine). Positions 1686 to 2102 (NLVRKEVSSL…HGINVRHVGR (417 aa)) are functional unit e (wall). His1726 provides a ligand contact to Cu cation. An intrachain disulfide couples Cys1732 to Cys1743. Residues 1744–1746 (CLH) constitute a cross-link (2'-(S-cysteinyl)-histidine (Cys-His)). His1746, His1755, His1868, His1872, and His1899 together coordinate Cu cation. 2 cysteine pairs are disulfide-bonded: Cys1858–Cys1925 and Cys2014–Cys2020. Residues 1878 to 1919 (SKTHSIGHLHYASYDPLFYIHHSQTDRIWAIWQALQEHRGLS) form a WD 5 repeat. Residues 2103-2522 (NRIRMELSEL…DDHGSDHIAG (420 aa)) are functional unit f (wall). Residue His2143 participates in Cu cation binding. A disulfide bridge links Cys2149 with Cys2159. The 2'-(S-cysteinyl)-histidine (Cys-His) cross-link spans 2160–2162 (CIH). Cu cation-binding residues include His2162, His2171, His2281, His2285, and His2312. Residues 2168–2204 (PHWHRLYTLQMDMALLSHGSAVAIPYWDWTKPISKLP) form a WD 6 repeat. 2 disulfides stabilise this stretch: Cys2271/Cys2338 and Cys2425/Cys2431. The functional unit g (internal arc) stretch occupies residues 2523-2929 (SGVRKDVTSL…SGHDHSERHD (407 aa)). His2563 serves as a coordination point for Cu cation. A disulfide bond links Cys2569 and Cys2579. The 2'-(S-cysteinyl)-histidine (Cys-His) cross-link spans 2580–2582 (CTH). Residues His2582, His2591, His2691, His2695, and His2722 each coordinate Cu cation. Cystine bridges form between Cys2681–Cys2748 and Cys2835–Cys2841. The stretch at 2700–2742 (GHTPYGMSSLEYTAYDPLFYLHHSNTDRIWAIWQALQKYRGFQ) is one WD 7 repeat. The disordered stretch occupies residues 2898 to 2927 (PSDRIKSPTIEHHGGDHHGGDTSGHDHSER). Positions 2930 to 3421 (GFFRKEVGSL…VRIHIHIEDE (492 aa)) are functional unit h (internal slab). His2970 is a binding site for Cu cation. The cysteines at positions 2976 and 2986 are disulfide-linked. The 2'-(S-cysteinyl)-histidine (Cys-His) cross-link spans 2987–2989 (CVH). Cu cation contacts are provided by His2989, His2998, His3099, His3103, and His3130. Cystine bridges form between Cys3089–Cys3156 and Cys3374–Cys3407. The stretch at 3109 to 3150 (TETYSMSSLAFSAYDPVFMILHSGLDRLWIIWQELQKLRKKP) is one WD 8 repeat.

It belongs to the tyrosinase family. Hemocyanin subfamily. In terms of assembly, homo-didecamer and homo-multidecamer. In terms of processing, probably N-glycosylated. Asn-2489 is buried deeply in the protein which make it inaccessible for sugar attachment. Hemolymph.

It localises to the secreted. Its subcellular location is the extracellular space. Hemocyanins are copper-containing oxygen carriers occurring freely dissolved in the hemolymph of many mollusks and arthropods. The polypeptide is Hemocyanin 2 (Megathura crenulata (Giant keyhole limpet)).